We begin with the raw amino-acid sequence, 554 residues long: Phosphomannomutase (554 aa).

Ser-149 (phosphoserine intermediate) is an active-site residue. The Mg(2+) site is built by Ser-149, Asp-301, Asp-303, and Asp-305.

The protein belongs to the phosphohexose mutase family. The cofactor is Mg(2+).

It catalyses the reaction alpha-D-mannose 1-phosphate = D-mannose 6-phosphate. This is Phosphomannomutase (manB) from Mycoplasma pneumoniae (strain ATCC 29342 / M129 / Subtype 1) (Mycoplasmoides pneumoniae).